The following is a 358-amino-acid chain: Aromatic amino acid aminotransferase (358 aa).

At Lys-214 the chain carries N6-(pyridoxal phosphate)lysine.

This sequence belongs to the class-II pyridoxal-phosphate-dependent aminotransferase family. Homodimer. Pyridoxal 5'-phosphate serves as cofactor.

It catalyses the reaction an aromatic L-alpha-amino acid + 2-oxoglutarate = an aromatic oxo-acid + L-glutamate. Functionally, aminotransferase that catalyzes the conversion of aromatic amino acids and 2-oxoglutarate into corresponding aromatic oxo acids and L-glutamate. In Rhodococcus erythropolis (strain PR4 / NBRC 100887), this protein is Aromatic amino acid aminotransferase.